The primary structure comprises 300 residues: MAKPLSISSHPSVHLAWRAYFEMTKPKVVALMLLTVLVGMCLAMPTILPVKPLVAGLLGIAMMAGSAAALNHLIDRRIDGMMARTYNRPLPKGRVSARRALLFAALLGSLGFVILYVFTNPLTAWLTFASLIGYALIYTAYLKRATPQNIVIGGLAGAMPPLLGWTAVTNQFHGHALLLVIIIFLWTPPHFWALAIHRRAEYAKVDIPMLPVTHGVEFTKTCILLYTILLAIACLLPVLVGMSGPLYFVCSSLLSTGFIYKAWQLKYQDSEGLAMQVFRFSIYHLMLLFMALLLDHYLWA.

The next 9 membrane-spanning stretches (helical) occupy residues 28 to 48, 54 to 74, 100 to 120, 122 to 142, 149 to 169, 176 to 196, 222 to 242, 243 to 263, and 280 to 300; these read VVALMLLTVLVGMCLAMPTIL, VAGLLGIAMMAGSAAALNHLI, ALLFAALLGSLGFVILYVFTN, LTAWLTFASLIGYALIYTAYL, NIVIGGLAGAMPPLLGWTAVT, ALLLVIIIFLWTPPHFWALAI, CILLYTILLAIACLLPVLVGM, SGPLYFVCSSLLSTGFIYKAW, and FSIYHLMLLFMALLLDHYLWA.

It belongs to the UbiA prenyltransferase family. Protoheme IX farnesyltransferase subfamily.

Its subcellular location is the cell inner membrane. The catalysed reaction is heme b + (2E,6E)-farnesyl diphosphate + H2O = Fe(II)-heme o + diphosphate. It participates in porphyrin-containing compound metabolism; heme O biosynthesis; heme O from protoheme: step 1/1. Functionally, converts heme B (protoheme IX) to heme O by substitution of the vinyl group on carbon 2 of heme B porphyrin ring with a hydroxyethyl farnesyl side group. The protein is Protoheme IX farnesyltransferase 1 of Shewanella sp. (strain MR-4).